The following is a 431-amino-acid chain: Glucose-1-phosphate adenylyltransferase (431 aa).

Lys39 is a beta-D-fructose 1,6-bisphosphate binding site. The AMP site is built by Arg40, His46, and Arg52. An alpha-D-glucose 1-phosphate-binding site is contributed by Tyr114. Position 130 (Arg130) interacts with AMP. Residues Gly179, 194 to 195, and Ser212 contribute to the alpha-D-glucose 1-phosphate site; that span reads EK. Residues Glu370 and Arg386 each contribute to the AMP site. Beta-D-fructose 1,6-bisphosphate is bound by residues 419–423 and 429–431; these read REMLR and QER.

This sequence belongs to the bacterial/plant glucose-1-phosphate adenylyltransferase family. As to quaternary structure, homotetramer.

It carries out the reaction alpha-D-glucose 1-phosphate + ATP + H(+) = ADP-alpha-D-glucose + diphosphate. The protein operates within glycan biosynthesis; glycogen biosynthesis. Its activity is regulated as follows. Allosterically activated by fructose-1,6-bisphosphate (F16BP) and inhibited by AMP. Its function is as follows. Involved in the biosynthesis of ADP-glucose, a building block required for the elongation reactions to produce glycogen. Catalyzes the reaction between ATP and alpha-D-glucose 1-phosphate (G1P) to produce pyrophosphate and ADP-Glc. This is Glucose-1-phosphate adenylyltransferase from Salmonella paratyphi C (strain RKS4594).